A 496-amino-acid polypeptide reads, in one-letter code: Solute carrier family 2, facilitated glucose transporter member 11 (496 aa).

The Cytoplasmic portion of the chain corresponds to 1–11; it reads MRALRRLIQGR. Residues 12–32 form a helical membrane-spanning segment; the sequence is ILLLTICAAGIGGTFQFGYNL. The Extracellular segment spans residues 33 to 61; the sequence is SIINAPTLHIQEFTNETWQARTGEPLPDH. N-linked (GlcNAc...) asparagine glycosylation occurs at Asn-47. A helical membrane pass occupies residues 62–82; the sequence is LVLLMWSLIVSLYPLGGLFGA. The Cytoplasmic segment spans residues 83-97; sequence LLAGPLAITLGRKKS. A helical transmembrane segment spans residues 98 to 118; that stretch reads LLVNNIFVVSAAILFGFSRKA. Over 119–128 the chain is Extracellular; the sequence is GSFEMIMLGR. The chain crosses the membrane as a helical span at residues 129-149; sequence LLVGVNAGVSMNIQPMYLGES. Residues 150–157 lie on the Cytoplasmic side of the membrane; it reads APKELRGA. A helical transmembrane segment spans residues 158-178; it reads VAMSSAIFTALGIVMGQVVGL. The Extracellular segment spans residues 179 to 187; sequence RELLGGPQA. A helical transmembrane segment spans residues 188–208; the sequence is WPLLLASCLVPGALQLASLPL. At 209–273 the chain is on the cytoplasmic side; that stretch reads LPESPRYLLI…LFQHRALRRQ (65 aa). The chain crosses the membrane as a helical span at residues 274–294; that stretch reads VTSLVVLGSAMELCGNDSVYA. Residues 295 to 311 lie on the Extracellular side of the membrane; sequence YASSVFRKAGVPEAKIQ. A helical transmembrane segment spans residues 312 to 332; that stretch reads YAIIGTGSCELLTAVVSCVVI. Residues 333–338 lie on the Cytoplasmic side of the membrane; it reads ERVGRR. Residues 339–359 form a helical membrane-spanning segment; it reads VLLIGGYSLMTCWGSIFTVAL. Residues 360–364 are Extracellular-facing; it reads CLQSS. The helical transmembrane segment at 365-385 threads the bilayer; the sequence is FPWTLYLAMACIFAFILSFGI. Over 386–408 the chain is Cytoplasmic; it reads GPAGVTGILATELFDQMARPAAC. Residues 409 to 429 form a helical membrane-spanning segment; sequence MVCGALMWIMLILVGLGFPFI. At 430-435 the chain is on the extracellular side; sequence MEALSH. Residues 436–456 traverse the membrane as a helical segment; sequence FLYVPFLGVCVCGAIYTGLFL. Topologically, residues 457 to 496 are cytoplasmic; that stretch reads PETKGKTFQEISKELHRLNFPRRAQGPTWRSLEVIQSTEL.

It belongs to the major facilitator superfamily. Sugar transporter (TC 2.A.1.1) family. Glucose transporter subfamily. In terms of tissue distribution, expressed in heart and skeletal muscle.

Its subcellular location is the cell membrane. It carries out the reaction D-glucose(out) = D-glucose(in). Facilitative glucose transporter. The protein is Solute carrier family 2, facilitated glucose transporter member 11 of Homo sapiens (Human).